A 326-amino-acid chain; its full sequence is Lipoyl synthase (326 aa).

[4Fe-4S] cluster contacts are provided by Cys68, Cys73, Cys79, Cys94, Cys98, Cys101, and Ser308. Residues 80 to 297 (FNHGTATFMI…KDVAMGLGFS (218 aa)) enclose the Radical SAM core domain.

This sequence belongs to the radical SAM superfamily. Lipoyl synthase family. The cofactor is [4Fe-4S] cluster.

It is found in the cytoplasm. It carries out the reaction [[Fe-S] cluster scaffold protein carrying a second [4Fe-4S](2+) cluster] + N(6)-octanoyl-L-lysyl-[protein] + 2 oxidized [2Fe-2S]-[ferredoxin] + 2 S-adenosyl-L-methionine + 4 H(+) = [[Fe-S] cluster scaffold protein] + N(6)-[(R)-dihydrolipoyl]-L-lysyl-[protein] + 4 Fe(3+) + 2 hydrogen sulfide + 2 5'-deoxyadenosine + 2 L-methionine + 2 reduced [2Fe-2S]-[ferredoxin]. It functions in the pathway protein modification; protein lipoylation via endogenous pathway; protein N(6)-(lipoyl)lysine from octanoyl-[acyl-carrier-protein]: step 2/2. Functionally, catalyzes the radical-mediated insertion of two sulfur atoms into the C-6 and C-8 positions of the octanoyl moiety bound to the lipoyl domains of lipoate-dependent enzymes, thereby converting the octanoylated domains into lipoylated derivatives. The sequence is that of Lipoyl synthase from Aeromonas salmonicida (strain A449).